Here is a 75-residue protein sequence, read N- to C-terminus: MAAIEVGRVCVKTAGREAGENGVILDIIDKNFVEVVGVNVKNRRCNVSHLEPTENKIELKSDDIEEIKKELESLE.

It belongs to the eukaryotic ribosomal protein eL14 family.

The chain is Large ribosomal subunit protein eL14 from Methanothermobacter thermautotrophicus (strain ATCC 29096 / DSM 1053 / JCM 10044 / NBRC 100330 / Delta H) (Methanobacterium thermoautotrophicum).